Consider the following 466-residue polypeptide: Asparagine--tRNA ligase (466 aa).

The protein belongs to the class-II aminoacyl-tRNA synthetase family. In terms of assembly, homodimer.

Its subcellular location is the cytoplasm. The enzyme catalyses tRNA(Asn) + L-asparagine + ATP = L-asparaginyl-tRNA(Asn) + AMP + diphosphate + H(+). This chain is Asparagine--tRNA ligase, found in Aeromonas hydrophila subsp. hydrophila (strain ATCC 7966 / DSM 30187 / BCRC 13018 / CCUG 14551 / JCM 1027 / KCTC 2358 / NCIMB 9240 / NCTC 8049).